Here is a 129-residue protein sequence, read N- to C-terminus: Large ribosomal subunit protein uL22 (129 aa).

The protein belongs to the universal ribosomal protein uL22 family. Part of the 50S ribosomal subunit.

In terms of biological role, this protein binds specifically to 23S rRNA; its binding is stimulated by other ribosomal proteins, e.g. L4, L17, and L20. It is important during the early stages of 50S assembly. It makes multiple contacts with different domains of the 23S rRNA in the assembled 50S subunit and ribosome. The globular domain of the protein is located near the polypeptide exit tunnel on the outside of the subunit, while an extended beta-hairpin is found that lines the wall of the exit tunnel in the center of the 70S ribosome. The protein is Large ribosomal subunit protein uL22 of Aster yellows witches'-broom phytoplasma (strain AYWB).